Consider the following 667-residue polypeptide: Protein-glutamine gamma-glutamyltransferase 4 (667 aa).

3 N-linked (GlcNAc...) asparagine glycosylation sites follow: Asn-151, Asn-220, and Asn-227. Active-site residues include Cys-256, His-315, and Asp-338. Ca(2+)-binding residues include Asn-378 and Asp-380. The N-linked (GlcNAc...) asparagine glycan is linked to Asn-408. Ca(2+) contacts are provided by Glu-430 and Glu-435. Residues 430-449 (EGSPEERKAMEKASGKRPDD) are disordered. 2 N-linked (GlcNAc...) asparagine glycosylation sites follow: Asn-472 and Asn-488.

Belongs to the transglutaminase superfamily. Transglutaminase family. Homodimer. The cofactor is Ca(2+). The N-terminus is blocked. In terms of processing, probably linked to the cell membrane via a lipid-anchor, possibly a GPI-anchor. Post-translationally, N-glycosylated on 2 Asn residues by a high mannose oligosaccharide consisting of five mannose residues and a fucosylated biantennary complex glycan. In terms of tissue distribution, expressed in the coagulating gland, the dorsal part of the prostate and in semen (at protein level). Expressed at low levels in the lateral prostate and seminal vesicle. Not expressed in the epididymis, kidney, liver, serum, sperm plug, testes and ventral prostate.

It localises to the secreted. The protein localises to the cell membrane. It catalyses the reaction L-glutaminyl-[protein] + L-lysyl-[protein] = [protein]-L-lysyl-N(6)-5-L-glutamyl-[protein] + NH4(+). Functionally, associated with the mammalian reproductive process. Plays an important role in the formation of the seminal coagulum through the cross-linking of specific proteins present in the seminal plasma. Transglutaminase is also required to stabilize the copulatory plug. The protein is Protein-glutamine gamma-glutamyltransferase 4 (Tgm4) of Rattus norvegicus (Rat).